A 324-amino-acid chain; its full sequence is MIFSKISQVAHYVPQQLVTNNDLANIMDTSHEWIFSRTGIAERHISRDEMTSDLAIQVADQLLTQSGLKADAIDFIIVATISPDATMPSTAAKVQAAIAATSAFAFDMTAACSGFVFALAMADKLIASGAYQNGMVIGAETLSKLVNWQDRATAVLFGDGAGGVLLEASKDKHVLAETLHTDGARCQSLISGETSLSSPYSIGKKAIATIQMDGRAIFDFAIRDVSKSILTLMAQSDITKDDIDYCLLHQANRRILDKIARKIDVPREKFLENMMRYGNTSAASIPILLSEAVQKGQIRLDGTQKILLSGFGGGLTWGSLIVKI.

Catalysis depends on residues Cys112 and His249. Residues 250-254 (QANRR) are ACP-binding. Asn279 is an active-site residue.

This sequence belongs to the thiolase-like superfamily. FabH family. In terms of assembly, homodimer.

The protein resides in the cytoplasm. It catalyses the reaction malonyl-[ACP] + acetyl-CoA + H(+) = 3-oxobutanoyl-[ACP] + CO2 + CoA. It functions in the pathway lipid metabolism; fatty acid biosynthesis. Its function is as follows. Catalyzes the condensation reaction of fatty acid synthesis by the addition to an acyl acceptor of two carbons from malonyl-ACP. Catalyzes the first condensation reaction which initiates fatty acid synthesis and may therefore play a role in governing the total rate of fatty acid production. Possesses both acetoacetyl-ACP synthase and acetyl transacylase activities. Its substrate specificity determines the biosynthesis of branched-chain and/or straight-chain of fatty acids. In Streptococcus pyogenes serotype M4 (strain MGAS10750), this protein is Beta-ketoacyl-[acyl-carrier-protein] synthase III.